The following is a 638-amino-acid chain: Threonine--tRNA ligase (638 aa).

Positions 1–61 (MPKITLPDGT…KNDSKVVIIT (61 aa)) constitute a TGS domain. The segment at 242–533 (DHRKLGKKHS…LIEQYEAKFP (292 aa)) is catalytic. Zn(2+)-binding residues include Cys333, His384, and His510.

It belongs to the class-II aminoacyl-tRNA synthetase family. Homodimer. It depends on Zn(2+) as a cofactor.

The protein localises to the cytoplasm. It catalyses the reaction tRNA(Thr) + L-threonine + ATP = L-threonyl-tRNA(Thr) + AMP + diphosphate + H(+). Catalyzes the attachment of threonine to tRNA(Thr) in a two-step reaction: L-threonine is first activated by ATP to form Thr-AMP and then transferred to the acceptor end of tRNA(Thr). Also edits incorrectly charged L-seryl-tRNA(Thr). The sequence is that of Threonine--tRNA ligase from Prochlorococcus marinus (strain MIT 9515).